Consider the following 456-residue polypeptide: GTPase Der (456 aa).

2 EngA-type G domains span residues 4-169 (PIVA…PSKE) and 178-353 (IQLA…EQHR). Residues 10-17 (GRPNVGKS), 57-61 (DTGGL), 120-123 (NKCE), 184-191 (GRPNVGKS), 231-235 (DTAGI), and 296-299 (NKWD) contribute to the GTP site. A KH-like domain is found at 354–439 (RRVSTSVVNE…PLKLFWRGKQ (86 aa)).

Belongs to the TRAFAC class TrmE-Era-EngA-EngB-Septin-like GTPase superfamily. EngA (Der) GTPase family. In terms of assembly, associates with the 50S ribosomal subunit.

In terms of biological role, GTPase that plays an essential role in the late steps of ribosome biogenesis. In Prochlorococcus marinus (strain MIT 9211), this protein is GTPase Der.